We begin with the raw amino-acid sequence, 489 residues long: Lysine--tRNA ligase (489 aa).

Residues E399 and E406 each coordinate Mg(2+).

Belongs to the class-II aminoacyl-tRNA synthetase family. In terms of assembly, homodimer. It depends on Mg(2+) as a cofactor.

Its subcellular location is the cytoplasm. The enzyme catalyses tRNA(Lys) + L-lysine + ATP = L-lysyl-tRNA(Lys) + AMP + diphosphate. This Malacoplasma penetrans (strain HF-2) (Mycoplasma penetrans) protein is Lysine--tRNA ligase.